A 94-amino-acid chain; its full sequence is Integration host factor subunit beta (94 aa).

It belongs to the bacterial histone-like protein family. As to quaternary structure, heterodimer of an alpha and a beta chain.

This protein is one of the two subunits of integration host factor, a specific DNA-binding protein that functions in genetic recombination as well as in transcriptional and translational control. The protein is Integration host factor subunit beta of Escherichia coli (strain UTI89 / UPEC).